The sequence spans 714 residues: Calpain-1 catalytic subunit (714 aa).

In terms of domain architecture, Calpain catalytic spans 55–354 (LFRDEAFPPV…FTRLEICNLT (300 aa)). Ca(2+)-binding residues include Gln109 and Asp114. Active-site residues include Cys115, His272, and Asn296. 2 residues coordinate Ca(2+): Asp318 and Asp323. Thr354 is modified (phosphothreonine). A domain III region spans residues 355–526 (PDALKSQRVR…KKAGTQELDD (172 aa)). A linker region spans residues 527 to 542 (QVQAILPDEQVLSEEE). The domain IV stretch occupies residues 543-713 (IDENFKALFR…LFKWLQLTMF (171 aa)). 3 EF-hand domains span residues 585–618 (FSLE…NRIR), 615–650 (NRIR…AGFK), and 680–714 (VRLE…TMFA). 10 residues coordinate Ca(2+): Asp598, Asp600, Asn602, Lys604, Glu609, Asp628, Asp630, Ser632, Ser634, and Glu639.

The protein belongs to the peptidase C2 family. As to quaternary structure, forms a heterodimer with a small (regulatory) subunit CAPNS1. Ca(2+) serves as cofactor. In terms of processing, undergoes calcium-induced successive autoproteolytic cleavages that generate a membrane-bound 78 kDa active form and an intracellular 75 kDa active form. Calpastatin reduces with high efficiency the transition from 78 kDa to 75 kDa calpain forms.

It localises to the cytoplasm. The protein resides in the cell membrane. The catalysed reaction is Broad endopeptidase specificity.. Activated by micromolar concentrations of calcium and inhibited by calpastatin. In terms of biological role, calcium-regulated non-lysosomal thiol-protease which catalyzes limited proteolysis of substrates involved in cytoskeletal remodeling and signal transduction. Proteolytically cleaves CTBP1. Cleaves and activates caspase-7 (CASP7). The polypeptide is Calpain-1 catalytic subunit (Sus scrofa (Pig)).